The primary structure comprises 375 residues: DNA replication and repair protein RecF (375 aa).

30–37 (GENAQGKT) contributes to the ATP binding site.

It belongs to the RecF family.

The protein localises to the cytoplasm. Its function is as follows. The RecF protein is involved in DNA metabolism; it is required for DNA replication and normal SOS inducibility. RecF binds preferentially to single-stranded, linear DNA. It also seems to bind ATP. The protein is DNA replication and repair protein RecF of Bacillus thuringiensis (strain Al Hakam).